The chain runs to 546 residues: Nicotinic acid-CoA ligase olcI (546 aa).

AMP is bound at residue Met194 to Lys205. An AMP-binding region spans residues Glu445 to Lys523.

The protein belongs to the ATP-dependent AMP-binding enzyme family.

The catalysed reaction is nicotinate + ATP + CoA = nicotinyl-CoA + AMP + diphosphate. It participates in secondary metabolite biosynthesis; terpenoid biosynthesis. Nicotinic acid-CoA ligase; part of the gene cluster that mediates the biosynthesis of 15-deoxyoxalicine B. The first step of the pathway is the synthesis of nicotinyl-CoA from nicotinic acid by the nicotinic acid-CoA ligase olcI. Nicotinyl-CoA is then a substrate of polyketide synthase olcA to produce 4-hydroxy-6-(3-pyridinyl)-2H-pyran-2-one (HPPO) which is further prenylated by the polyprenyl transferase olcH to yield geranylgeranyl-HPPO. Geranylgeranyl pyrophosphate is provided by the cluster-specific geranylgeranyl pyrophosphate synthase olcC. The FAD-dependent monooxygenase olcE catalyzes the epoxidation of geranylgeranyl-HPPO and the terpene cyclase olcD catalyzes the cyclization of the terpenoid component, resulting in the formation of the tricyclic terpene moiety seen in predecaturin E. The cytochrome P450 monooxygenase then catalyzes the allylic oxidation of predecaturin E, which is followed by spirocylization with concomitant loss of one molecule of water to form decaturin E. Decaturin E is the substrate of the cytochrome P450 monooxygenase olcJ which hydroxylates it at the C-29 position to form decaturin F. The short-chain dehydrogenase/reductase olcF may catalyze the oxidation of decaturin F to generate the 29-hydroxyl-27-one intermediate, and subsequent hemiacetal formation probably leads to the formation of decaturin C. The dioxygenase olcK may be a peroxisomal enzyme that catalyzes the hydroxylation of decaturin C into decaturin A once decaturin C is shuttled into the peroxisome by the MFS transporter olcL. Finally the cytochrome P450 monooxygenase olcB catalyzes the oxidative rearrangement to yield 15-deoxyoxalicine B. In the absence of olcJ, decaturin E may be shunted to a pathway in which it is oxidized to a ketone, possibly by olcF, to form decaturin D, which undergoes further allylic oxidation to yield decaturin G. Moreover, in the absence of oclK or oclL, oclB can convert decaturin C into 15-deoxyoxalicine A. This chain is Nicotinic acid-CoA ligase olcI, found in Penicillium canescens.